The following is a 63-amino-acid chain: Large ribosomal subunit protein bL28 (63 aa).

A disordered region spans residues 1–20 (MSKRCAITGKGPMVGNNVSH).

This sequence belongs to the bacterial ribosomal protein bL28 family.

This is Large ribosomal subunit protein bL28 from Campylobacter concisus (strain 13826).